We begin with the raw amino-acid sequence, 145 residues long: D-aminoacyl-tRNA deacylase (145 aa).

Positions 137–138 (GP) match the Gly-cisPro motif, important for rejection of L-amino acids motif.

Belongs to the DTD family. In terms of assembly, homodimer.

It is found in the cytoplasm. It catalyses the reaction glycyl-tRNA(Ala) + H2O = tRNA(Ala) + glycine + H(+). The enzyme catalyses a D-aminoacyl-tRNA + H2O = a tRNA + a D-alpha-amino acid + H(+). Its function is as follows. An aminoacyl-tRNA editing enzyme that deacylates mischarged D-aminoacyl-tRNAs. Also deacylates mischarged glycyl-tRNA(Ala), protecting cells against glycine mischarging by AlaRS. Acts via tRNA-based rather than protein-based catalysis; rejects L-amino acids rather than detecting D-amino acids in the active site. By recycling D-aminoacyl-tRNA to D-amino acids and free tRNA molecules, this enzyme counteracts the toxicity associated with the formation of D-aminoacyl-tRNA entities in vivo and helps enforce protein L-homochirality. The polypeptide is D-aminoacyl-tRNA deacylase (Aeromonas hydrophila subsp. hydrophila (strain ATCC 7966 / DSM 30187 / BCRC 13018 / CCUG 14551 / JCM 1027 / KCTC 2358 / NCIMB 9240 / NCTC 8049)).